We begin with the raw amino-acid sequence, 37 residues long: Cytochrome b6-f complex subunit 5 (37 aa).

Residues 5-25 (LLSGIILGLIPITICGLFFTA) form a helical membrane-spanning segment.

The protein belongs to the PetG family. The 4 large subunits of the cytochrome b6-f complex are cytochrome b6, subunit IV (17 kDa polypeptide, PetD), cytochrome f and the Rieske protein, while the 4 small subunits are PetG, PetL, PetM and PetN. The complex functions as a dimer.

Its subcellular location is the plastid. It is found in the chloroplast thylakoid membrane. Component of the cytochrome b6-f complex, which mediates electron transfer between photosystem II (PSII) and photosystem I (PSI), cyclic electron flow around PSI, and state transitions. PetG is required for either the stability or assembly of the cytochrome b6-f complex. The protein is Cytochrome b6-f complex subunit 5 of Euglena gracilis.